The following is a 479-amino-acid chain: Flotillin-like protein 3 (479 aa).

Residue cysteine 36 is the site of S-palmitoyl cysteine attachment. 2 coiled-coil regions span residues 227–251 and 306–326; these read KVKT…AALA and EYET…KQAE.

This sequence belongs to the band 7/mec-2 family. Flotillin subfamily. In terms of processing, may be palmitoylated.

Its subcellular location is the cell membrane. It localises to the membrane. It is found in the caveola. May act as a scaffolding protein within caveolar membranes, functionally participating in formation of caveolae or caveolae-like vesicles. The protein is Flotillin-like protein 3 (FLOT3) of Arabidopsis thaliana (Mouse-ear cress).